The primary structure comprises 975 residues: Synaptopodin 2-like protein (975 aa).

One can recognise a PDZ domain in the interval 6 to 85 (EVQVTLAGGA…QLVLTVRRVT (80 aa)). Disordered regions lie at residues 18 to 41 (GFRLQGGTEQRKPLQIRRRSQAGR), 86 to 214 (DEGS…PAEA), and 314 to 349 (AGTGTEEEDGIPPTSESELDEETFSDARSLTNQSDW). Phosphoserine occurs at positions 105 and 108. Thr-138 carries the post-translational modification Phosphothreonine. Residues Ser-140, Ser-163, Ser-175, and Ser-177 each carry the phosphoserine modification. Positions 187 to 200 (GSPSQGDSRVSSPS) are enriched in polar residues. Residues 202–214 (EEGAALQPPPAEA) are compositionally biased toward low complexity. The span at 339 to 349 (DARSLTNQSDW) shows a compositional bias: polar residues. A phosphoserine mark is found at Ser-342, Ser-347, Ser-371, Ser-378, and Ser-381. 4 positions are modified to omega-N-methylarginine: Arg-383, Arg-463, Arg-466, and Arg-476. The segment at 491-649 (KVNEGLGSTS…ETKNSPNPEL (159 aa)) is disordered. Over residues 502–516 (APSPFAAPPQGPTPL) the composition is skewed to pro residues. Residues 519 to 528 (FTTVVPSHTP) are compositionally biased toward polar residues. Composition is skewed to low complexity over residues 530-540 (SGASSSTQRSS) and 571-580 (SAAAMTSTAS). Ser-667 and Ser-675 each carry phosphoserine. Residues 687 to 731 (LGGRSYKTLPQVSPKTPPPMAPKTPPPTTPKTPPPVAPKPGSRGL) form a disordered region. Over residues 701 to 724 (KTPPPMAPKTPPPTTPKTPPPVAP) the composition is skewed to pro residues. Thr-702 and Thr-710 each carry phosphothreonine. Position 754 is an omega-N-methylarginine (Arg-754). Residues 772-797 (EATSGSSLNPGLRPRSPSPTPSLPPS) form a disordered region. 2 positions are modified to phosphoserine: Ser-787 and Ser-789. Residue Thr-791 is modified to Phosphothreonine. 3 positions are modified to omega-N-methylarginine: Arg-805, Arg-825, and Arg-888. Ser-890 carries the phosphoserine modification. 2 positions are modified to phosphothreonine: Thr-891 and Thr-897. At Arg-909 the chain carries Omega-N-methylarginine. Arg-920 is modified (asymmetric dimethylarginine; alternate). Residue Arg-920 is modified to Omega-N-methylarginine; alternate. Residues Arg-953 and Arg-955 each carry the omega-N-methylarginine modification.

This sequence belongs to the synaptopodin family.

The protein resides in the cytoplasm. Its subcellular location is the cytoskeleton. Its function is as follows. Actin-associated protein that may play a role in modulating actin-based shape. The sequence is that of Synaptopodin 2-like protein (Synpo2l) from Mus musculus (Mouse).